A 466-amino-acid chain; its full sequence is Glucose-6-phosphate 1-dehydrogenase 1 (466 aa).

NADP(+)-binding positions include S48, 88–89 (DV), and K141. The substrate site is built by H171, K175, E209, and D228. H233 (proton acceptor) is an active-site residue. Residues K319 and K324 each coordinate substrate.

It belongs to the glucose-6-phosphate dehydrogenase family.

It catalyses the reaction D-glucose 6-phosphate + NADP(+) = 6-phospho-D-glucono-1,5-lactone + NADPH + H(+). It functions in the pathway carbohydrate degradation; pentose phosphate pathway; D-ribulose 5-phosphate from D-glucose 6-phosphate (oxidative stage): step 1/3. Functionally, catalyzes the oxidation of glucose 6-phosphate to 6-phosphogluconolactone. In Mycobacterium tuberculosis (strain CDC 1551 / Oshkosh), this protein is Glucose-6-phosphate 1-dehydrogenase 1.